The primary structure comprises 331 residues: MASALWTVLPSRMSLRSLQWSLLLLSLLSFLVMWYLSLPHYNVIERVNWMYFYEYEPIYRQDFHFTLREHSNCSHQNPFLVILVTSHPSDVKARQAIRVTWGEKKSWWGYEVLTFFLLGQEAEKEDKMLALSLEDEHLLYGDIIRQDFLDTYNNLTLKTIMAFRWVTEFCPNAKYVMKTDTDVFINTGNLVKYLLNLNHSEKFFTGYPLIDNYSYRGFYQKTHISYQEYPFKVFPPYCSGLGYIMSRDLVPRIYEMMGHVKPIKFEDVYVGICLNLLKVNIHIPEDTNLFFLYRIHLDVCQLRRVIAAHGFSSKEIITFWQVMLRNTTCHY.

The Cytoplasmic segment spans residues 1–20 (MASALWTVLPSRMSLRSLQW). A helical; Signal-anchor for type II membrane protein transmembrane segment spans residues 21 to 43 (SLLLLSLLSFLVMWYLSLPHYNV). Residues 44-331 (IERVNWMYFY…VMLRNTTCHY (288 aa)) lie on the Lumenal side of the membrane. N-linked (GlcNAc...) asparagine glycans are attached at residues asparagine 72, asparagine 154, asparagine 198, asparagine 212, and asparagine 326.

The protein belongs to the glycosyltransferase 31 family. Mg(2+) serves as cofactor.

It localises to the golgi apparatus membrane. It carries out the reaction a globoside Gb3Cer (d18:1(4E)) + UDP-N-acetyl-alpha-D-galactosamine = a globoside Gb4Cer (d18:1(4E)) + UDP + H(+). It participates in protein modification; protein glycosylation. Functionally, transfers N-acetylgalactosamine onto globotriaosylceramide. Plays a critical role in preimplantation stage embryonic development. The chain is UDP-GalNAc:beta-1,3-N-acetylgalactosaminyltransferase 1 (B3GALNT1) from Pongo abelii (Sumatran orangutan).